The sequence spans 473 residues: uncharacterized protein (473 aa).

The N-terminal stretch at 1-19 is a signal peptide; sequence MIRAFLVFPYLYILVQSNG.

This is an uncharacterized protein from Methanocaldococcus jannaschii (strain ATCC 43067 / DSM 2661 / JAL-1 / JCM 10045 / NBRC 100440) (Methanococcus jannaschii).